Consider the following 270-residue polypeptide: HTH-type transcriptional repressor DrrR1 (270 aa).

A compositionally biased stretch (low complexity) spans 1–11; the sequence is MESGTSRTSDT. The segment at 1-28 is disordered; the sequence is MESGTSRTSDTGGTGRAGSTETSGSGDI. Positions 49–109 constitute an HTH tetR-type domain; sequence TLTLDRVVEA…LMLDRVQRPS (61 aa). A DNA-binding region (H-T-H motif) is located at residues 72–91; sequence SMRRVAAELGTGTMSLYRYV.

It is found in the cytoplasm. Its activity is regulated as follows. Daunorubicin and doxorubicin can induce dissociation of DrrR1 from its DNA complex. Ampicillin cannot release DrrR1 from the DNA complex at the same concentrations. Transcriptional regulator that modulates the expression of the drrA2-drrB2 genes, which encode an ABC transporter involved in daunorubicin efflux, in response to intracellular daunorubicin/doxorubicin accumulation. In the absence of daunorubicin or doxorubicin, binds directly to the drrA2-drrB2 promoter region and negatively regulates expression of the genes. In the presence of daunorubicin or doxorubicin, DrrR1 dissociates from DNA, leading to the transcription of the genes. In Streptomyces coeruleorubidus, this protein is HTH-type transcriptional repressor DrrR1.